The following is a 99-amino-acid chain: Class II hydrophobin B (99 aa).

An N-terminal signal peptide occupies residues 1–15 (MKFFAIAALFAGALA). Disulfide bonds link Cys30-Cys79 and Cys40-Cys70.

The protein belongs to the cerato-ulmin hydrophobin family.

Its subcellular location is the secreted. It is found in the cell wall. It localises to the vacuole. The protein resides in the cytoplasmic vesicle. Its function is as follows. Aerial growth, conidiation, and dispersal of filamentous fungi in the environment rely upon a capability of their secreting small amphipathic proteins called hydrophobins (HPBs) with low sequence identity. Class I can self-assemble into an outermost layer of rodlet bundles on aerial cell surfaces, conferring cellular hydrophobicity that supports fungal growth, development and dispersal; whereas Class II form highly ordered films at water-air interfaces through intermolecular interactions but contribute nothing to the rodlet structure. Hyd2B contributes to certain cell wall-related features, such as hydrophobicity but is not involved in cell wall-related events during fungal proliferation in host hemocoel. Does not contribute to conidial hydrophobicity. Involved in insect hemocoel colonization independent of cell hydrophobicity. The chain is Class II hydrophobin B from Beauveria bassiana (strain ARSEF 2860) (White muscardine disease fungus).